Consider the following 474-residue polypeptide: BPI fold-containing family B member 1 (474 aa).

The signal sequence occupies residues 1–21 (MAGPWIITLLCGLLGATLVQA). Residues asparagine 153, asparagine 160, asparagine 263, and asparagine 400 are each glycosylated (N-linked (GlcNAc...) asparagine). Residues cysteine 157 and cysteine 200 are joined by a disulfide bond.

The protein belongs to the BPI/LBP/Plunc superfamily. Plunc family. As to expression, expressed in tongue, lung, thymus, and stomach. Expressed in epithelia of palate, anterior pharynx, trachea and upper bronchi. Expressed in distal tip of papillae in the anterior third of the tongue and in serous cells of von Ebner glands in the posterior third of the tongue. Expressed in columnar epithelium of the duodenum in embryonic gut at 16.5 dpc.

It localises to the secreted. May play a role in innate immunity in mouth, nose and lungs. Binds bacterial lipopolysaccharide (LPS) and modulates the cellular responses to LPS. May be involved in formation of the left-right axis in the node of the developing embryo. The polypeptide is BPI fold-containing family B member 1 (Bpifb1) (Mus musculus (Mouse)).